We begin with the raw amino-acid sequence, 98 residues long: Co-chaperonin GroES 1 (98 aa).

The protein belongs to the GroES chaperonin family. In terms of assembly, heptamer of 7 subunits arranged in a ring. Interacts with the chaperonin GroEL.

The protein resides in the cytoplasm. Its function is as follows. Together with the chaperonin GroEL, plays an essential role in assisting protein folding. The GroEL-GroES system forms a nano-cage that allows encapsulation of the non-native substrate proteins and provides a physical environment optimized to promote and accelerate protein folding. GroES binds to the apical surface of the GroEL ring, thereby capping the opening of the GroEL channel. This Rhodopseudomonas palustris (strain ATCC BAA-98 / CGA009) protein is Co-chaperonin GroES 1.